The following is a 362-amino-acid chain: Dihydroorotate dehydrogenase (quinone) (362 aa).

Residues 62–66 (AGYDK) and Thr-86 contribute to the FMN site. Residue Lys-66 participates in substrate binding. A substrate-binding site is contributed by 111 to 115 (NRLGF). The FMN site is built by Asn-139 and Asn-170. Asn-170 is a binding site for substrate. The active-site Nucleophile is Ser-173. Residue Asn-175 participates in substrate binding. Lys-215 and Ser-243 together coordinate FMN. 244–245 (NT) lines the substrate pocket. Residues Gly-266, Gly-295, and 316-317 (YS) contribute to the FMN site.

The protein belongs to the dihydroorotate dehydrogenase family. Type 2 subfamily. Monomer. FMN is required as a cofactor.

The protein localises to the cell membrane. The catalysed reaction is (S)-dihydroorotate + a quinone = orotate + a quinol. It participates in pyrimidine metabolism; UMP biosynthesis via de novo pathway; orotate from (S)-dihydroorotate (quinone route): step 1/1. Catalyzes the conversion of dihydroorotate to orotate with quinone as electron acceptor. In Rhizobium meliloti (strain 1021) (Ensifer meliloti), this protein is Dihydroorotate dehydrogenase (quinone).